A 681-amino-acid chain; its full sequence is Amine oxidase [copper-containing] alpha 3, peroxisomal (681 aa).

323 to 334 serves as a coordination point for substrate; the sequence is YLDCGDFGCGQC. Residue Asp-325 is the Proton acceptor of the active site. Cys-344 and Cys-370 form a disulfide bridge. 410 to 415 is a binding site for substrate; that stretch reads VGNYDY. Tyr-413 functions as the Schiff-base intermediate with substrate; via topaquinone in the catalytic mechanism. Tyr-413 bears the 2',4',5'-topaquinone mark. Cu cation is bound by residues His-470 and His-472. Mn(2+) contacts are provided by Asp-481, Asp-621, and Ile-622. His-632 is a Cu cation binding site.

The protein belongs to the copper/topaquinone oxidase family. Post-translationally, topaquinone (TPQ) is generated by copper-dependent autoxidation of a specific tyrosyl residue. In terms of tissue distribution, mostly expressed in stems, and, at lower levels, in flowers and leaves. Mainly detectable in stipules, hypocotyls and roots.

The protein localises to the peroxisome. The catalysed reaction is a primary methyl amine + O2 + H2O = an aldehyde + H2O2 + NH4(+). Its pathway is amine and polyamine degradation; putrescine degradation. Its function is as follows. Copper amine oxidase that can use putrescine and spermidine as substrates. Involved in putrescine catabolism in peroxisomes. The protein is Amine oxidase [copper-containing] alpha 3, peroxisomal of Arabidopsis thaliana (Mouse-ear cress).